We begin with the raw amino-acid sequence, 470 residues long: Pyruvate kinase I (470 aa).

Substrate is bound at residue R32. Positions 34, 36, 66, and 67 each coordinate K(+). Residue 34-37 coordinates ATP; the sequence is NFSH. R73 is a binding site for ATP. K76 is subject to N6-acetyllysine. K156 contributes to the ATP binding site. Residue E222 participates in Mg(2+) binding. Substrate is bound by residues G245, D246, and T278. Mg(2+) is bound at residue D246. K319 bears the N6-acetyllysine mark.

The protein belongs to the pyruvate kinase family. Homotetramer. The cofactor is Mg(2+). K(+) serves as cofactor.

The enzyme catalyses pyruvate + ATP = phosphoenolpyruvate + ADP + H(+). It participates in carbohydrate degradation; glycolysis; pyruvate from D-glyceraldehyde 3-phosphate: step 5/5. The protein is Pyruvate kinase I (pykF) of Escherichia coli O157:H7.